Reading from the N-terminus, the 142-residue chain is RNA-directed DNA polymerase homolog (142 aa).

The protein localises to the mitochondrion. The enzyme catalyses RNA(n) + a ribonucleoside 5'-triphosphate = RNA(n+1) + diphosphate. The sequence is that of RNA-directed DNA polymerase homolog from Oenothera berteroana (Bertero's evening primrose).